Here is a 176-residue protein sequence, read N- to C-terminus: Large ribosomal subunit protein uL10 (176 aa).

This sequence belongs to the universal ribosomal protein uL10 family. As to quaternary structure, part of the ribosomal stalk of the 50S ribosomal subunit. The N-terminus interacts with L11 and the large rRNA to form the base of the stalk. The C-terminus forms an elongated spine to which L12 dimers bind in a sequential fashion forming a multimeric L10(L12)X complex.

Forms part of the ribosomal stalk, playing a central role in the interaction of the ribosome with GTP-bound translation factors. This is Large ribosomal subunit protein uL10 from Sorangium cellulosum (strain So ce56) (Polyangium cellulosum (strain So ce56)).